The primary structure comprises 519 residues: Baeyer-Villiger monooxygenase (519 aa).

FAD-binding positions include glutamate 41, 49–52 (TWRD), aspartate 61, tyrosine 67, and valine 110. 59–61 (ACD) is a binding site for NADP(+). Residues 183–189 (TGASAIQ), 206–207 (RT), and 292–293 (KR) each bind NADP(+). Methionine 399 is an FAD binding site. The segment at 499 to 519 (GAKAAEADTGADTGADAEVSA) is disordered.

It belongs to the FAD-binding monooxygenase family. It depends on FAD as a cofactor.

Catalyzes a Baeyer-Villiger oxidation reaction, i.e. the insertion of an oxygen atom into a carbon-carbon bond adjacent to a carbonyl, which converts ketones to esters or lactones using NADPH and/or NADH as an electron donor. Thus, can convert bicyclo[3.2.0]hept-2-en-6-one into the oxidative lactone products 2-oxabicyclo[3.3.0]oct-6-en-3-one and 3-oxabicyclo[3.3.0]oct-6-en-2-one. Is also able to catalyze the sulfoxidation of methyl phenyl sulfide (thioanisole). This is Baeyer-Villiger monooxygenase from Streptomyces coelicolor (strain ATCC BAA-471 / A3(2) / M145).